The chain runs to 1398 residues: DNA-directed RNA polymerase subunit beta' (1398 aa).

Residues Cys70, Cys72, Cys85, and Cys88 each coordinate Zn(2+). Residues Asp460, Asp462, and Asp464 each coordinate Mg(2+). Residues Cys814, Cys888, Cys895, and Cys898 each contribute to the Zn(2+) site.

This sequence belongs to the RNA polymerase beta' chain family. As to quaternary structure, the RNAP catalytic core consists of 2 alpha, 1 beta, 1 beta' and 1 omega subunit. When a sigma factor is associated with the core the holoenzyme is formed, which can initiate transcription. Requires Mg(2+) as cofactor. It depends on Zn(2+) as a cofactor.

The enzyme catalyses RNA(n) + a ribonucleoside 5'-triphosphate = RNA(n+1) + diphosphate. Functionally, DNA-dependent RNA polymerase catalyzes the transcription of DNA into RNA using the four ribonucleoside triphosphates as substrates. The polypeptide is DNA-directed RNA polymerase subunit beta' (Pseudomonas putida (Arthrobacter siderocapsulatus)).